The primary structure comprises 903 residues: Probable leucine--tRNA ligase, mitochondrial (903 aa).

An N6-acetyllysine modification is found at Lys-68. The 'HIGH' region signature appears at 92–102 (YPSGKLHMGHV). An N6-acetyllysine modification is found at Lys-236. Residues 639 to 643 (KMSKS) carry the 'KMSKS' region motif. Lys-642 contacts ATP. Ser-711 is modified (phosphoserine).

This sequence belongs to the class-I aminoacyl-tRNA synthetase family.

The protein localises to the mitochondrion matrix. It carries out the reaction tRNA(Leu) + L-leucine + ATP = L-leucyl-tRNA(Leu) + AMP + diphosphate. The protein is Probable leucine--tRNA ligase, mitochondrial (LARS2) of Pongo abelii (Sumatran orangutan).